A 440-amino-acid chain; its full sequence is 23S rRNA (uracil(1939)-C(5))-methyltransferase RlmD (440 aa).

The TRAM domain occupies 10 to 68 (KSTQPQRIEFTVDSLDHHCVGIGRHQGKAIFIEGALPGELVKARILEDKKQYAHAALQQ). Residues Cys81, Cys87, Cys90, and Cys169 each contribute to the [4Fe-4S] cluster site. S-adenosyl-L-methionine is bound by residues Gln273, Phe302, Asn307, Glu323, Asp350, and Asp371. The active-site Nucleophile is the Cys397.

It belongs to the class I-like SAM-binding methyltransferase superfamily. RNA M5U methyltransferase family. RlmD subfamily.

It carries out the reaction uridine(1939) in 23S rRNA + S-adenosyl-L-methionine = 5-methyluridine(1939) in 23S rRNA + S-adenosyl-L-homocysteine + H(+). Catalyzes the formation of 5-methyl-uridine at position 1939 (m5U1939) in 23S rRNA. The protein is 23S rRNA (uracil(1939)-C(5))-methyltransferase RlmD of Aeromonas hydrophila subsp. hydrophila (strain ATCC 7966 / DSM 30187 / BCRC 13018 / CCUG 14551 / JCM 1027 / KCTC 2358 / NCIMB 9240 / NCTC 8049).